The chain runs to 425 residues: UDP-N-acetylglucosamine 1-carboxyvinyltransferase (425 aa).

A phosphoenolpyruvate-binding site is contributed by 24-25 (KN). Arg-95 serves as a coordination point for UDP-N-acetyl-alpha-D-glucosamine. Residue Cys-119 is the Proton donor of the active site. A 2-(S-cysteinyl)pyruvic acid O-phosphothioketal modification is found at Cys-119. UDP-N-acetyl-alpha-D-glucosamine contacts are provided by residues 124–128 (RPVDQ), Asp-308, and Val-330.

This sequence belongs to the EPSP synthase family. MurA subfamily.

The protein resides in the cytoplasm. The enzyme catalyses phosphoenolpyruvate + UDP-N-acetyl-alpha-D-glucosamine = UDP-N-acetyl-3-O-(1-carboxyvinyl)-alpha-D-glucosamine + phosphate. The protein operates within cell wall biogenesis; peptidoglycan biosynthesis. Functionally, cell wall formation. Adds enolpyruvyl to UDP-N-acetylglucosamine. The sequence is that of UDP-N-acetylglucosamine 1-carboxyvinyltransferase from Deinococcus deserti (strain DSM 17065 / CIP 109153 / LMG 22923 / VCD115).